Consider the following 421-residue polypeptide: Aspartokinase (421 aa).

An ATP-binding site is contributed by 7–10 (KYGG). 25–30 (RIVATK) is a binding site for substrate. Ser41 serves as a coordination point for ATP. Residues 45 to 49 (DTTDE), Glu74, 125 to 126 (LD), 151 to 154 (RGGS), and Ser154 each bind substrate. ATP contacts are provided by residues 174-175 (SD), 180-185 (YTADPR), and Lys210. ACT domains follow at residues 267 to 343 (VTVL…YDDQ) and 349 to 421 (LVGA…GTGR). Residues Asp274, 274-279 (DKPGEA), 292-294 (NID), Gln298, 360-361 (VT), 374-375 (NI), and 381-382 (SE) contribute to the substrate site.

The protein belongs to the aspartokinase family. In terms of assembly, tetramer consisting of 2 isoforms Alpha (catalytic and regulation) and of a homodimer of 2 isoforms Beta (regulation). The dimerization of the beta isoforms is stabilized by the bonding of threonine.

It carries out the reaction L-aspartate + ATP = 4-phospho-L-aspartate + ADP. It participates in amino-acid biosynthesis; L-lysine biosynthesis via DAP pathway; (S)-tetrahydrodipicolinate from L-aspartate: step 1/4. It functions in the pathway amino-acid biosynthesis; L-methionine biosynthesis via de novo pathway; L-homoserine from L-aspartate: step 1/3. The protein operates within amino-acid biosynthesis; L-threonine biosynthesis; L-threonine from L-aspartate: step 1/5. Its activity is regulated as follows. Feedback inhibition by lysine and threonine, but he enzyme is moderately inhibited by lysine alone, and threonine alone has no effect. Its function is as follows. Catalyzes the phosphorylation of the beta-carboxyl group of aspartic acid with ATP to yield 4-phospho-L-aspartate, which is involved in the branched biosynthetic pathway leading to the biosynthesis of amino acids lysine, threonine, isoleucine and methionine. This chain is Aspartokinase (lysC), found in Corynebacterium glutamicum (strain ATCC 13032 / DSM 20300 / JCM 1318 / BCRC 11384 / CCUG 27702 / LMG 3730 / NBRC 12168 / NCIMB 10025 / NRRL B-2784 / 534).